The sequence spans 139 residues: Glucanase inhibitor protein 3 (139 aa).

Positions 1-138 constitute a Peptidase S1 domain; sequence VLTLEKPSKF…GIEWINSVIK (138 aa). Cystine bridges form between Cys-61–Cys-73 and Cys-83–Cys-114.

The protein belongs to the peptidase S1 family.

It is found in the secreted. Its function is as follows. Secreted effector that suppresses host plant glucan elicitor-mediated defense responses. Targets host endoglucanases and inhibits the endoglucanase-mediated release of elicitor-active glucan oligosaccharides from P.sojae cell walls. This is Glucanase inhibitor protein 3 from Phytophthora sojae (Soybean stem and root rot agent).